Reading from the N-terminus, the 648-residue chain is Biosynthetic arginine decarboxylase (648 aa).

An N6-(pyridoxal phosphate)lysine modification is found at Lys109. Position 291-301 (291-301 (IDVGGGLGIDF)) interacts with substrate.

It belongs to the Orn/Lys/Arg decarboxylase class-II family. SpeA subfamily. It depends on Mg(2+) as a cofactor. The cofactor is pyridoxal 5'-phosphate.

It carries out the reaction L-arginine + H(+) = agmatine + CO2. It functions in the pathway amine and polyamine biosynthesis; agmatine biosynthesis; agmatine from L-arginine: step 1/1. Catalyzes the biosynthesis of agmatine from arginine. The polypeptide is Biosynthetic arginine decarboxylase (Prochlorococcus marinus (strain MIT 9215)).